The following is a 287-amino-acid chain: ATP synthase gamma chain (287 aa).

The protein belongs to the ATPase gamma chain family. In terms of assembly, F-type ATPases have 2 components, CF(1) - the catalytic core - and CF(0) - the membrane proton channel. CF(1) has five subunits: alpha(3), beta(3), gamma(1), delta(1), epsilon(1). CF(0) has three main subunits: a, b and c.

It localises to the cell membrane. In terms of biological role, produces ATP from ADP in the presence of a proton gradient across the membrane. The gamma chain is believed to be important in regulating ATPase activity and the flow of protons through the CF(0) complex. The protein is ATP synthase gamma chain of Halothermothrix orenii (strain H 168 / OCM 544 / DSM 9562).